A 674-amino-acid chain; its full sequence is Tripartite terminase subunit 3 (674 aa).

Positions 212–219 match the Walker A motif motif; it reads VPRRHGKT. Residues 305–310 carry the Walker B motif motif; that stretch reads LLLVDE. Glutamate 310 acts as the For ATPase activity in catalysis. Catalysis depends on for nuclease activity residues aspartate 463, glutamate 534, and aspartate 651.

It belongs to the herpesviridae TRM3 protein family. Interacts with the terminase subunits TRM1 and TRM2. Interacts with portal protein.

It is found in the host nucleus. Component of the molecular motor that translocates viral genomic DNA in empty capsid during DNA packaging. Forms a tripartite terminase complex together with TRM1 and TRM2 in the host cytoplasm. Once the complex reaches the host nucleus, it interacts with the capsid portal vertex. This portal forms a ring in which genomic DNA is translocated into the capsid. TRM3 carries an RNase H-like nuclease activity that plays an important role for the cleavage of concatemeric viral DNA into unit length genomes. In Homo sapiens (Human), this protein is Tripartite terminase subunit 3.